The primary structure comprises 115 residues: Putative TGFB1-induced anti-apoptotic factor 1 (115 aa).

In terms of tissue distribution, not detectable in normal kidney and liver. Up-regulated in chronic and acute allograft rejection: expressed in the inflammatory infiltrate and in tubular epithelial cells.

It is found in the nucleus. Functionally, inhibits the cytotoxic effects of TNF-alpha and overexpressed TNF receptor adapters TRADD, FADD, and RIPK1. Involved in TGF-beta1 inhibition of IkappaB-alpha expression and suppression of TNF-mediated IkappaB-alpha degradation. This is Putative TGFB1-induced anti-apoptotic factor 1 (MYO18A) from Homo sapiens (Human).